Here is a 1087-residue protein sequence, read N- to C-terminus: Ubiquitin-associated protein 2-like (1087 aa).

Met1 is subject to N-acetylmethionine. The segment at 1-33 (MMTSVGTNRARGNWEQPQNQNQTQHKQRPQATA) is disordered. Residues 49 to 89 (DFEEKVKQLIDITGKNQDECVIALHDCNGDVNRAINVLLEG) form the UBA domain. The segment at 92 to 234 (DTHSWEMVGK…TGHFEPDDGT (143 aa)) is disordered. Residues 118 to 132 (EEGKENRDRDRDYSR) are compositionally biased toward basic and acidic residues. Positions 133-145 (RRGGPPRRGRGAS) are enriched in basic residues. Arg187 and Arg190 each carry asymmetric dimethylarginine. Positions 213–226 (NYGNSSGNTWNNTG) are enriched in low complexity. 2 positions are modified to phosphoserine: Ser356 and Ser360. Low complexity predominate over residues 377–389 (AQHSQSGSTTTSS). Residues 377–420 (AQHSQSGSTTTSSWDMGSTTQSPSLVQYDLKNPSDSAVHSPFTK) are disordered. Positions 390 to 401 (WDMGSTTQSPSL) are enriched in polar residues. Phosphoserine occurs at positions 410 and 416. Position 425 is a phosphothreonine (Thr425). Ser439, Ser454, Ser467, Ser470, Ser471, and Ser477 each carry phosphoserine. Disordered stretches follow at residues 440–493 (PAVA…KKAS), 530–656 (SDYE…IPPL), and 669–794 (TNQH…LPPG). Low complexity-rich tracts occupy residues 474 to 485 (QSSSPQPAQQKL) and 534 to 569 (STPT…SQES). Over residues 570–656 (GYQSGPIQST…SPSTSSIPPL (87 aa)) the composition is skewed to polar residues. 4 positions are modified to phosphoserine: Ser604, Ser605, Ser608, and Ser609. The segment covering 688–784 (TTTTQHSSTL…STRSSVATTS (97 aa)) has biased composition (low complexity). Phosphoserine is present on residues Ser852 and Ser859. Residues 865–901 (FGRGDASSPAPATTLAQPQQNQTQTHHTTQQTFLNPA) are disordered. The span at 873–896 (PAPATTLAQPQQNQTQTHHTTQQT) shows a compositional bias: low complexity. Ser962 and Val969 each carry omega-N-methylarginine. Residues Val969 and Thr976 each carry the N6-acetyllysine modification. The segment at 1040-1087 (QQPHSQILHHHLQQDGQTGSGQRSQTSSIPQKPQTNKSAYNSYSWGAN) is disordered. Over residues 1053 to 1067 (QDGQTGSGQRSQTSS) the composition is skewed to low complexity. The segment covering 1068–1087 (IPQKPQTNKSAYNSYSWGAN) has biased composition (polar residues).

As to quaternary structure, interacts with BMI1. Part of a complex consisting of UBAP2L, BMI1 and RNF2. Interacts with G3BP1 (via NTF2 domain); promoting stress granule formation. Post-translationally, acetylated. As to expression, ubiquitous.

Its subcellular location is the nucleus. The protein localises to the chromosome. It is found in the cytoplasm. It localises to the stress granule. Functionally, recruits the ubiquitination machinery to RNA polymerase II for polyubiquitination, removal and degradation, when the transcription-coupled nucleotide excision repair (TC-NER) machinery fails to resolve DNA damage. Plays an important role in the activity of long-term repopulating hematopoietic stem cells (LT-HSCs). Is a regulator of stress granule assembly, required for their efficient formation. Required for proper brain development and neocortex lamination. The polypeptide is Ubiquitin-associated protein 2-like (Homo sapiens (Human)).